The primary structure comprises 233 residues: 6-carboxyhexanoate--CoA ligase (233 aa).

Belongs to the BioW family. In terms of assembly, homodimer. Requires Mg(2+) as cofactor.

It catalyses the reaction heptanedioate + ATP + CoA = 6-carboxyhexanoyl-CoA + AMP + diphosphate. The protein operates within metabolic intermediate metabolism; pimeloyl-CoA biosynthesis; pimeloyl-CoA from pimelate: step 1/1. Its function is as follows. Catalyzes the transformation of pimelate into pimeloyl-CoA with concomitant hydrolysis of ATP to AMP. The chain is 6-carboxyhexanoate--CoA ligase from Methanocaldococcus sp. (strain FS406-22).